A 217-amino-acid chain; its full sequence is 7-cyano-7-deazaguanine synthase (217 aa).

10–20 lines the ATP pocket; it reads FSGGQDSTTCL. Zn(2+) is bound by residues C185, C194, C197, and C200.

It belongs to the QueC family. Homodimer. Requires Zn(2+) as cofactor.

It catalyses the reaction 7-carboxy-7-deazaguanine + NH4(+) + ATP = 7-cyano-7-deazaguanine + ADP + phosphate + H2O + H(+). Its pathway is purine metabolism; 7-cyano-7-deazaguanine biosynthesis. In terms of biological role, catalyzes the ATP-dependent conversion of 7-carboxy-7-deazaguanine (CDG) to 7-cyano-7-deazaguanine (preQ(0)). The chain is 7-cyano-7-deazaguanine synthase from Streptococcus thermophilus (strain ATCC BAA-491 / LMD-9).